The following is a 529-amino-acid chain: L-ornithine N(5)-monooxygenase (529 aa).

FAD is bound by residues 100–108 (EKQPQFAWH) and glutamine 119. Lysine 124 is a binding site for substrate. FAD is bound at residue valine 185. 270–273 (NGQS) lines the NADP(+) pocket. Substrate is bound by residues 309–312 (NEIF) and asparagine 339. Residue 339 to 341 (NYG) participates in NADP(+) binding. FAD is bound at residue 493 to 495 (TLL). Serine 496 provides a ligand contact to substrate.

It belongs to the lysine N(6)-hydroxylase/L-ornithine N(5)-oxygenase family. In terms of assembly, homotetramer. It depends on FAD as a cofactor.

The catalysed reaction is L-ornithine + NADPH + O2 = N(5)-hydroxy-L-ornithine + NADP(+) + H2O. It catalyses the reaction L-ornithine + NADH + O2 = N(5)-hydroxy-L-ornithine + NAD(+) + H2O. It functions in the pathway siderophore biosynthesis. L-ornithine N(5)-monooxygenase; part of the gene cluster that mediates the biosynthesis of hydroxamate-containing siderophores that play a critical role in virulence. Cochliobolus heterostrophus produces extracellular coprogen-type siderophores including coprogen, neocoprogen I and neocoprogen II, as well as the intracellular siderophore ferricrocin. The role of extracellular siderophores is to supply iron to their producers in planta and the intracellular ferricrocin is required for intracellular iron distribution and storage with a crucial role in ascus and ascospore development. SIDA2 catalyzes the conversion of L-ornithine to N(5)-hydroxyornithine, the first step in the biosynthesis of all hydroxamate-containing siderophores. The assembly of extracellular coprogen-type siderophores is then performed by the nonribosomal peptide synthetase (NRPS) NPS6 whereas the intracellular siderophore ferricrocin is assembled by NPS2. The chain is L-ornithine N(5)-monooxygenase from Cochliobolus heterostrophus (strain C4 / ATCC 48331 / race T) (Southern corn leaf blight fungus).